Reading from the N-terminus, the 343-residue chain is Lumican (343 aa).

The signal sequence occupies residues 1 to 18 (MTLNSLPIFLVLISGIFC). Gln19 carries the post-translational modification Pyrrolidone carboxylic acid. Tyr20 and Tyr22 each carry sulfotyrosine. The LRRNT domain occupies 31–69 (DPFGPSTAVCAPECNCPLSYPTAMYCDNLKLKTIPIVPS). 8 LRR repeats span residues 70-91 (GIKY…TFDN), 94-117 (DLQW…VFSK), 120-140 (NLKK…PLPK), 141-162 (TLDD…ALEG), 165-186 (NLTV…GAFK), 190-211 (SLLY…LPHS), 212-232 (LLML…YFQG), and 235-255 (TLQY…PGNV). N-linked (GlcNAc...) (keratan sulfate) asparagine glycosylation is present at Asn91. Residue Asn130 is glycosylated (N-linked (GlcNAc...) (keratan sulfate) asparagine). Asn165 is a glycosylation site (N-linked (GlcNAc...) (keratan sulfate) asparagine). Asn257 carries an N-linked (GlcNAc...) (keratan sulfate) asparagine glycan. LRR repeat units lie at residues 260-281 (SLVE…SENL), 282-301 (ENFY…SFCK), and 310-330 (KITH…PQEM). Cysteines 300 and 333 form a disulfide. Asn320 carries an N-linked (GlcNAc...) asparagine glycan.

It belongs to the small leucine-rich proteoglycan (SLRP) family. SLRP class II subfamily. Binds to laminin. Contains keratan sulfate. As to expression, cornea and other tissues.

It is found in the secreted. Its subcellular location is the extracellular space. The protein localises to the extracellular matrix. The polypeptide is Lumican (LUM) (Gallus gallus (Chicken)).